Consider the following 700-residue polypeptide: MRYPGRMTDAPPDPRARYLALRDEVALHNRAYYEQDAPTIPDDEYDRLARELRELEAAHPEFADDHSPVQTVGGAPSSAFEPVTHPTQMTSLDNVFDDDELRDWQEKLARSLGLPLDTDDFTFTGELKIDGLSVNLYYLDGELQWAATRGNGRVGEIVTAQVLTIPDIPQKLEGLKGELEVRGEVYLSRADFAAFNAQAEELGTPLLKNPRNGAAGALRQKDPEVTRTRHLKAILYAVGKRDGVPARTQWEVLEWLSAQGFPTSRSSEHLRGIAAAADYHARMIRAHADFEFDADGTVLKLDSLSQQEEAGFTSRAPRWAIAYKFPVEEVETVLESITVNVGRTGKLAPLAHLSPRLIEGSTVSKATLHNEDYIRDMDLRVGDTVLVRKSGGVIPQIMRVLPDKRPADAAPFEFPTHCPVCGHEAVRAEGDANTYCPNPACPAQSFERIRYFVSRGAMDVRGIGEKLVTQLLHEGLIHDAAGLYTLSAEQLAGLERGGEKKAGNILGQLEASKTKPLWRLINALGMSHVGQRNAQALARAFGTLEGLLAATPEQIEAVPGLGGIIAQSVTASLADPAMRDLIARLQASGVAPQAEEVTRTDQLSGLNFVLTGALSRPREVIKAELEAAGGRVTGSVTKKTSYLVAGEDAGSKLARAGELGVPVLDEAGLAALLAERGLGERGVAEDGMSGAETEAAPAES.

NAD(+) is bound by residues 42-46, 91-92, and glutamate 126; these read DDEYD and SL. Catalysis depends on lysine 128, which acts as the N6-AMP-lysine intermediate. Residues arginine 149, glutamate 184, lysine 300, and lysine 324 each contribute to the NAD(+) site. Zn(2+) contacts are provided by cysteine 418, cysteine 421, cysteine 436, and cysteine 441. In terms of domain architecture, BRCT spans 598–686; it reads TRTDQLSGLN…GLGERGVAED (89 aa).

It belongs to the NAD-dependent DNA ligase family. LigA subfamily. The cofactor is Mn(2+).

It carries out the reaction NAD(+) + (deoxyribonucleotide)n-3'-hydroxyl + 5'-phospho-(deoxyribonucleotide)m = (deoxyribonucleotide)n+m + AMP + beta-nicotinamide D-nucleotide.. In terms of biological role, DNA ligase that catalyzes the formation of phosphodiester linkages between 5'-phosphoryl and 3'-hydroxyl groups in double-stranded DNA using NAD as a coenzyme and as the energy source for the reaction. It is essential for DNA replication and repair of damaged DNA. The sequence is that of DNA ligase from Deinococcus radiodurans (strain ATCC 13939 / DSM 20539 / JCM 16871 / CCUG 27074 / LMG 4051 / NBRC 15346 / NCIMB 9279 / VKM B-1422 / R1).